Here is a 117-residue protein sequence, read N- to C-terminus: Putative membrane protein insertion efficiency factor (117 aa).

Belongs to the UPF0161 family.

The protein resides in the cell inner membrane. In terms of biological role, could be involved in insertion of integral membrane proteins into the membrane. The polypeptide is Putative membrane protein insertion efficiency factor (Bartonella quintana (strain Toulouse) (Rochalimaea quintana)).